Reading from the N-terminus, the 279-residue chain is Ribosomal RNA small subunit methyltransferase J (279 aa).

Residues Glu-138–Arg-139 and Asp-194 contribute to the S-adenosyl-L-methionine site.

It belongs to the methyltransferase superfamily. RsmJ family.

It is found in the cytoplasm. The catalysed reaction is guanosine(1516) in 16S rRNA + S-adenosyl-L-methionine = N(2)-methylguanosine(1516) in 16S rRNA + S-adenosyl-L-homocysteine + H(+). In terms of biological role, specifically methylates the guanosine in position 1516 of 16S rRNA. The polypeptide is Ribosomal RNA small subunit methyltransferase J (Acinetobacter baumannii (strain ATCC 17978 / DSM 105126 / CIP 53.77 / LMG 1025 / NCDC KC755 / 5377)).